Here is a 34-residue protein sequence, read N- to C-terminus: Protamine-Z1/Z2 (34 aa).

The tract at residues 1-34 (PRRRRRSSRPVRRRRRYRRSTAARRRRRVVRRRR) is disordered.

In terms of tissue distribution, testis.

The protein localises to the nucleus. The protein resides in the chromosome. Functionally, protamines substitute for histones in the chromatin of sperm during the haploid phase of spermatogenesis. They compact sperm DNA into a highly condensed, stable and inactive complex. In Sarda orientalis (Striped bonito), this protein is Protamine-Z1/Z2.